We begin with the raw amino-acid sequence, 167 residues long: Signal recognition particle subunit SRP21 (167 aa).

N-acetylserine is present on Ser-2. Residues 123–139 show a composition bias toward basic and acidic residues; sequence VEKSDPAAKKTATEPKQ. Residues 123 to 167 are disordered; that stretch reads VEKSDPAAKKTATEPKQKANAVQNNNGNSAASKKKKNKNKGKKKR. Basic residues predominate over residues 154–167; that stretch reads SKKKKNKNKGKKKR.

Fungal signal recognition particle (SRP) complex consists of a 7S RNA molecule (scR1) and at least six protein subunits: SRP72, SRP68, SRP54, SEC65, SRP21 and SRP14. At least SRP14, SRP21, SRP68 and SRP72 are proposed to get assembled together with scR1 RNA as a pre-SRP complex in the nucleolus which is exported to the cytoplasm.

It localises to the cytoplasm. It is found in the nucleus. Functionally, signal-recognition-particle (SRP) assembly has a crucial role in targeting secretory proteins to the rough endoplasmic reticulum (ER) membrane. SRP is required for the cotranslational protein translocation for ER import and preferentially recognizes strongly hydrophobic signal sequences. It is involved in targeting the nascent chain-ribosome (RNC) complex to the ER and is proposed to participate in the arrest of nascent chain elongation during membrane targeting. The chain is Signal recognition particle subunit SRP21 (SRP21) from Saccharomyces cerevisiae (strain ATCC 204508 / S288c) (Baker's yeast).